Consider the following 212-residue polypeptide: Large ribosomal subunit protein uL3 (212 aa).

The tract at residues 133–156 is disordered; sequence SMTHGSKNHRLPGSTGAGTTPGRV.

The protein belongs to the universal ribosomal protein uL3 family. In terms of assembly, part of the 50S ribosomal subunit. Forms a cluster with proteins L14 and L19.

Its function is as follows. One of the primary rRNA binding proteins, it binds directly near the 3'-end of the 23S rRNA, where it nucleates assembly of the 50S subunit. The polypeptide is Large ribosomal subunit protein uL3 (Crocosphaera subtropica (strain ATCC 51142 / BH68) (Cyanothece sp. (strain ATCC 51142))).